The sequence spans 461 residues: ADP-specific phosphofructokinase (461 aa).

Positions 1–457 constitute an ADPK domain; the sequence is MVRELLEKAR…FASYLAMLKE (457 aa). 3 residues coordinate Mg(2+): Glu-268, Glu-298, and Asp-441. The Proton acceptor role is filled by Asp-441.

The protein belongs to the carbohydrate kinase PfkC family. Mg(2+) is required as a cofactor.

The protein resides in the cytoplasm. The enzyme catalyses beta-D-fructose 6-phosphate + ADP = beta-D-fructose 1,6-bisphosphate + AMP + H(+). It functions in the pathway carbohydrate degradation; glycolysis. Its function is as follows. Catalyzes the phosphorylation of fructose 6-phosphate to fructose 1,6-bisphosphate using ADP as the phosphate donor. In Thermococcus zilligii, this protein is ADP-specific phosphofructokinase.